A 202-amino-acid chain; its full sequence is COMM domain-containing protein 10 (202 aa).

At alanine 2 the chain carries N-acetylalanine. The COMM domain occupies 133 to 202 (KLETVGWQLN…TIQAQLDSLT (70 aa)). A Phosphoserine modification is found at serine 155.

The protein belongs to the COMM domain-containing protein 10 family. Component of the commander complex consisting of the CCC subcomplex and the retriever subcomplex. Component of the CCC (COMMD/CCDC22/CCDC93) subcomplex consisting of COMMD1, COMMD2, COMMD3, COMMD4, COMMD5, COMMD6, COMMD7, COMMD8, COMMD9, COMMD10, CCDC22 and CCDC93; within the complex forms a heterodimer with COMMD5. Interacts with RELA, RELB, NFKB1/p105, NFKB2/p100. Interacts with CCDC22, CCDC93, SCNN1B, CUL1, CUL2, CUL3, CUL4A, CUL4B, CUL7. As to expression, ubiquitous.

It localises to the cytoplasm. Its subcellular location is the nucleus. Scaffold protein in the commander complex that is essential for endosomal recycling of transmembrane cargos; the commander complex is composed of the CCC subcomplex and the retriever subcomplex. May modulate activity of cullin-RING E3 ubiquitin ligase (CRL) complexes. May down-regulate activation of NF-kappa-B. This is COMM domain-containing protein 10 (COMMD10) from Homo sapiens (Human).